Here is a 141-residue protein sequence, read N- to C-terminus: Large ribosomal subunit protein uL11 (141 aa).

It belongs to the universal ribosomal protein uL11 family. As to quaternary structure, part of the ribosomal stalk of the 50S ribosomal subunit. Interacts with L10 and the large rRNA to form the base of the stalk. L10 forms an elongated spine to which L12 dimers bind in a sequential fashion forming a multimeric L10(L12)X complex. One or more lysine residues are methylated.

Functionally, forms part of the ribosomal stalk which helps the ribosome interact with GTP-bound translation factors. The polypeptide is Large ribosomal subunit protein uL11 (Opitutus terrae (strain DSM 11246 / JCM 15787 / PB90-1)).